A 212-amino-acid chain; its full sequence is Imidazole glycerol phosphate synthase subunit HisH (212 aa).

One can recognise a Glutamine amidotransferase type-1 domain in the interval 3-211 (LIAVIDYDMG…VQQVQKLALV (209 aa)). Cysteine 81 serves as the catalytic Nucleophile. Residues histidine 186 and glutamate 188 contribute to the active site.

Heterodimer of HisH and HisF.

Its subcellular location is the cytoplasm. The catalysed reaction is 5-[(5-phospho-1-deoxy-D-ribulos-1-ylimino)methylamino]-1-(5-phospho-beta-D-ribosyl)imidazole-4-carboxamide + L-glutamine = D-erythro-1-(imidazol-4-yl)glycerol 3-phosphate + 5-amino-1-(5-phospho-beta-D-ribosyl)imidazole-4-carboxamide + L-glutamate + H(+). It catalyses the reaction L-glutamine + H2O = L-glutamate + NH4(+). It participates in amino-acid biosynthesis; L-histidine biosynthesis; L-histidine from 5-phospho-alpha-D-ribose 1-diphosphate: step 5/9. IGPS catalyzes the conversion of PRFAR and glutamine to IGP, AICAR and glutamate. The HisH subunit catalyzes the hydrolysis of glutamine to glutamate and ammonia as part of the synthesis of IGP and AICAR. The resulting ammonia molecule is channeled to the active site of HisF. The protein is Imidazole glycerol phosphate synthase subunit HisH of Microcystis aeruginosa (strain NIES-843 / IAM M-2473).